The primary structure comprises 237 residues: Myelin protein zero-like protein 3 (237 aa).

A signal peptide spans 1-32; sequence MQLARGTVGGRGCALFPLLSILVVQGARIVLS. Residues 33 to 149 form the Ig-like V-type domain; it reads LEISADAHVR…NIPLTELTVT (117 aa). The Extracellular portion of the chain corresponds to 33–159; that stretch reads LEISADAHVR…ERGFGTMLSS (127 aa). Cysteines 53 and 129 form a disulfide. Asn124 carries an N-linked (GlcNAc...) asparagine glycan. The helical transmembrane segment at 160-180 threads the bilayer; it reads VALLSILVFVPSAVVVILLLV. Topologically, residues 181–237 are cytoplasmic; it reads RMGRKATGVQKRSRSGYKKSSIEVSDDTDQEDSNDCMTRLCVRCAECLDSDYEEEAY.

The protein belongs to the myelin P0 protein family. As to expression, present in all tissues tested, including the skin. Present in the keratinocytes and sebocytes in the skin (at protein level).

It is found in the membrane. Its function is as follows. Mediates homophilic cell-cell adhesion. The protein is Myelin protein zero-like protein 3 (Mpzl3) of Mus musculus (Mouse).